A 380-amino-acid chain; its full sequence is Flap endonuclease 1 (380 aa).

The tract at residues 1 to 104 (MGIKGLSQLI…GELTKRAEKR (104 aa)) is N-domain. Asp34 contributes to the Mg(2+) binding site. DNA is bound by residues Arg47 and Arg70. 5 residues coordinate Mg(2+): Asp86, Glu158, Glu160, Asp179, and Asp181. The I-domain stretch occupies residues 122–253 (DIDKFNRRLV…KKAVELINKH (132 aa)). Residue Glu158 participates in DNA binding. Residues Gly231 and Asp233 each coordinate DNA. Position 233 (Asp233) interacts with Mg(2+). Residues 336 to 344 (TQGRLDSFF) are interaction with PCNA. The interval 342–380 (SFFKVLPSTPNPKRKIEDKKTPASKKAKTTGGKPGRKPK) is disordered. The span at 363 to 380 (PASKKAKTTGGKPGRKPK) shows a compositional bias: basic residues.

Belongs to the XPG/RAD2 endonuclease family. FEN1 subfamily. In terms of assembly, interacts with PCNA. Three molecules of FEN1 bind to one PCNA trimer with each molecule binding to one PCNA monomer. PCNA stimulates the nuclease activity without altering cleavage specificity. It depends on Mg(2+) as a cofactor. In terms of processing, phosphorylated. Phosphorylation upon DNA damage induces relocalization to the nuclear plasma.

It is found in the nucleus. It localises to the nucleolus. The protein localises to the nucleoplasm. The protein resides in the mitochondrion. In terms of biological role, structure-specific nuclease with 5'-flap endonuclease and 5'-3' exonuclease activities involved in DNA replication and repair. During DNA replication, cleaves the 5'-overhanging flap structure that is generated by displacement synthesis when DNA polymerase encounters the 5'-end of a downstream Okazaki fragment. It enters the flap from the 5'-end and then tracks to cleave the flap base, leaving a nick for ligation. Also involved in the long patch base excision repair (LP-BER) pathway, by cleaving within the apurinic/apyrimidinic (AP) site-terminated flap. Acts as a genome stabilization factor that prevents flaps from equilibrating into structures that lead to duplications and deletions. Also possesses 5'-3' exonuclease activity on nicked or gapped double-stranded DNA, and exhibits RNase H activity. Also involved in replication and repair of rDNA and in repairing mitochondrial DNA. This is Flap endonuclease 1 from Aedes aegypti (Yellowfever mosquito).